The sequence spans 728 residues: MSNEAKCPFHQAAGNGTSNRDWWPNQLDLSILHRHSSLSDPMGKDFNYAQAFEKLDLAAVKRDLHALMTTSQDWWPADFGHYGGLFIRMAWHSAGTYRTADGRGGAGEGQQRFAPLNSWPDNANLDKARRLLWPIKQKYGRAISWADLLILTGNVALESMGFKTFGFAGGRADTWEPEDVYWGSEKIWLELSGGPNSRYSGDRQLENPLAAVQMGLIYVNPEGPDGNPDPVAAARDIRDTFARMAMNDEETVALIAGGHTFGKTHGAGPASNVGAEPEAAGIEAQGLGWKSAYRTGKGADAITSGLEVTWTTTPTQWSHNFFENLFGYEWELTKSPAGAHQWVAKGADAVIPDAFDPSKKHRPTMLTTDLSLRFDPAYEKISRRFHENPEQFADAFARAWFKLTHRDMGPRARYLGPEVPAEVLLWQDPIPAVDHPLIDAADAAELKAKVLASGLTVSQLVSTAWAAASTFRGSDKRGGANGARIRLAPQKDWEANQPEQLAAVLETLEAIRTAFNGAQRGGKQVSLADLIVLAGCAGVEQAAKNAGHAVTVPFAPGRADASQEQTDVESMAVLEPVADGFRNYLKGKYRVPAEVLLVDKAQLLTLSAPEMTVLLGGLRVLGANVGQSRHGVFTAREQALTNDFFVNLLDMGTEWKPTAADADVFEGRDRATGELKWTGTRVDLVFGSHSQLRALAEVYGSADAQEKFVRDFVAVWNKVMNLDRFDLA.

The tryptophyl-tyrosyl-methioninium (Trp-Tyr) (with M-244) cross-link spans 91-218 (WHSAGTYRTA…LAAVQMGLIY (128 aa)). Histidine 92 functions as the Proton acceptor in the catalytic mechanism. The tryptophyl-tyrosyl-methioninium (Tyr-Met) (with W-91) cross-link spans 218–244 (YVNPEGPDGNPDPVAAARDIRDTFARM). Histidine 259 is a heme b binding site.

It belongs to the peroxidase family. Peroxidase/catalase subfamily. In terms of assembly, homodimer or homotetramer. Requires heme b as cofactor. Formation of the three residue Trp-Tyr-Met cross-link is important for the catalase, but not the peroxidase activity of the enzyme.

The enzyme catalyses H2O2 + AH2 = A + 2 H2O. It carries out the reaction 2 H2O2 = O2 + 2 H2O. Bifunctional enzyme with both catalase and broad-spectrum peroxidase activity. This chain is Catalase-peroxidase, found in Burkholderia pseudomallei (strain 1710b).